The primary structure comprises 144 residues: Large ribosomal subunit protein uL15 (144 aa).

The disordered stretch occupies residues 24-52 (GSGLGKTAGRGHKGLKSRSGGSVRPGFEG).

This sequence belongs to the universal ribosomal protein uL15 family. Part of the 50S ribosomal subunit.

In terms of biological role, binds to the 23S rRNA. This chain is Large ribosomal subunit protein uL15, found in Cellvibrio japonicus (strain Ueda107) (Pseudomonas fluorescens subsp. cellulosa).